The primary structure comprises 1235 residues: High-affinity potassium transport protein (1235 aa).

Phosphoserine is present on Ser15. The next 2 membrane-spanning stretches (helical) occupy residues 49–70 (SFIA…ILLY) and 78–98 (IDTL…TVDI). Asn100 carries an N-linked (GlcNAc...) asparagine glycan. The chain crosses the membrane as a helical span at residues 107-127 (IVLYIVCCISTPIAVHSCLAF). Disordered stretches follow at residues 161-310 (LTAR…SPAD), 323-344 (EATA…GTRY), 361-441 (KIKI…TKPP), and 488-565 (RLST…HQLQ). The segment covering 164–179 (RTMTKNRTGTQRTSYP) has biased composition (polar residues). Asn169 is a glycosylation site (N-linked (GlcNAc...) asparagine). Basic and acidic residues predominate over residues 198 to 217 (VNRDEQDSVHSDQNSHDISR). Residues 219–232 (SSNNNTNHNGSSGS) show a composition bias toward low complexity. N-linked (GlcNAc...) asparagine glycosylation is found at Asn222 and Asn227. Acidic residues predominate over residues 237 to 247 (VKEDETDDNGE). Residues 248–274 (YQENNSYSTVGSSSNTVADESLNQKPK) show a composition bias toward polar residues. Residue Asn251 is glycosylated (N-linked (GlcNAc...) asparagine). 2 N-linked (GlcNAc...) asparagine glycosylation sites follow: Asn369 and Asn383. 2 stretches are compositionally biased toward polar residues: residues 370–415 (ESNT…SNSG) and 490–502 (STGS…SNNV). Ser414 carries the post-translational modification Phosphoserine. N-linked (GlcNAc...) asparagine glycans are attached at residues Asn497, Asn501, and Asn532. Residues 510 to 539 (DMDDDDDDDDNDGDNNEEYFADNESGDEDE) are compositionally biased toward acidic residues. A Phosphoserine modification is found at Ser534. Basic and acidic residues predominate over residues 540–563 (RVQQSEPHSDSELKSHQQQQEKHQ). Residues Asn580 and Asn677 are each glycosylated (N-linked (GlcNAc...) asparagine). Residues 671–706 (HDGSHKNGSEEASSDSNENIYSTNGGSDHNGLNNYP) are disordered. A compositionally biased stretch (polar residues) spans 680 to 706 (EEASSDSNENIYSTNGGSDHNGLNNYP). Helical transmembrane passes span 778–800 (ILVV…WIIL), 813–834 (VSPT…GLTL), 838–858 (SMMS…FIII), 862–882 (GFPI…PDLS), and 898–918 (CFTL…LAGL). Asn919 is a glycosylation site (N-linked (GlcNAc...) asparagine). The next 2 helical transmembrane spans lie at 923–943 (WILF…SKGY) and 971–991 (SIQV…AISI). The disordered stretch occupies residues 1003–1063 (GLYGDMGGEP…KKKKKTENPN (61 aa)). Positions 1010 to 1031 (GEPEDTDTEDDGNDEDDDEENE) are enriched in acidic residues. An N-linked (GlcNAc...) asparagine glycan is attached at Asn1030. Low complexity predominate over residues 1036–1049 (QSSQRSSSNNNNNN). 2 consecutive transmembrane segments (helical) span residues 1078 to 1098 (QLSF…ICEG) and 1111 to 1131 (IFAI…SLGY). Residue Asn1135 is glycosylated (N-linked (GlcNAc...) asparagine).

It belongs to the TrkH potassium transport family.

The protein resides in the membrane. In terms of biological role, this protein is required for high-affinity potassium transport. This is High-affinity potassium transport protein (TRK1) from Saccharomyces cerevisiae (strain ATCC 204508 / S288c) (Baker's yeast).